Reading from the N-terminus, the 324-residue chain is tRNA dimethylallyltransferase (324 aa).

20-27 provides a ligand contact to ATP; the sequence is GPTASGKS. Residue 22 to 27 participates in substrate binding; the sequence is TASGKS. 3 interaction with substrate tRNA regions span residues 45 to 48, 168 to 172, and 284 to 291; these read DSAL, QRLIR, and KRQITWLR.

Belongs to the IPP transferase family. As to quaternary structure, monomer. It depends on Mg(2+) as a cofactor.

The enzyme catalyses adenosine(37) in tRNA + dimethylallyl diphosphate = N(6)-dimethylallyladenosine(37) in tRNA + diphosphate. Catalyzes the transfer of a dimethylallyl group onto the adenine at position 37 in tRNAs that read codons beginning with uridine, leading to the formation of N6-(dimethylallyl)adenosine (i(6)A). The chain is tRNA dimethylallyltransferase from Hydrogenovibrio crunogenus (strain DSM 25203 / XCL-2) (Thiomicrospira crunogena).